A 223-amino-acid chain; its full sequence is Nicotinamide/nicotinic acid mononucleotide adenylyltransferase 2 (223 aa).

Positions 11 and 12 each coordinate NAD(+). His-19 provides a ligand contact to ATP. 7 residues coordinate NAD(+): Trp-87, Thr-90, Gly-116, Asp-118, Leu-133, Trp-134, and Arg-153. 190 to 191 (TR) contributes to the ATP binding site.

This sequence belongs to the eukaryotic NMN adenylyltransferase family. A divalent metal cation is required as a cofactor.

The enzyme catalyses beta-nicotinamide D-ribonucleotide + ATP + H(+) = diphosphate + NAD(+). The catalysed reaction is nicotinate beta-D-ribonucleotide + ATP + H(+) = deamido-NAD(+) + diphosphate. It participates in cofactor biosynthesis; NAD(+) biosynthesis; deamido-NAD(+) from nicotinate D-ribonucleotide: step 1/1. The protein operates within cofactor biosynthesis; NAD(+) biosynthesis; NAD(+) from nicotinamide D-ribonucleotide: step 1/1. Catalyzes the formation of NAD(+) from nicotinamide mononucleotide (NMN) and ATP. Can also use the deamidated form; nicotinic acid mononucleotide (NaMN) as substrate. This is Nicotinamide/nicotinic acid mononucleotide adenylyltransferase 2 from Caenorhabditis elegans.